The chain runs to 401 residues: UDP-GlcNAc:betaGal beta-1,3-N-acetylglucosaminyltransferase 9 (401 aa).

Residues 1–10 are Cytoplasmic-facing; that stretch reads MRRRLRLRRE. Residues 11-31 form a helical; Signal-anchor for type II membrane protein membrane-spanning segment; it reads ALLTLLLGATLGLLLYAQQEG. At 32-401 the chain is on the lumenal side; it reads AAPTTSAPRA…VPAGPFQWGP (370 aa). The tract at residues 33–85 is disordered; the sequence is APTTSAPRAQGRAAPGPTPGLRVFQAPDTGAAPPAYEGDTPEPPTPTGPFDFG. The span at 38–47 shows a compositional bias: low complexity; sequence APRAQGRAAP.

The protein belongs to the glycosyltransferase 31 family.

The protein localises to the golgi apparatus membrane. The chain is UDP-GlcNAc:betaGal beta-1,3-N-acetylglucosaminyltransferase 9 from Bos taurus (Bovine).